A 462-amino-acid chain; its full sequence is Jasmonoyl--L-amino acid synthetase GH3.3 (462 aa).

Residue Ser-103 coordinates ATP. Ser-106 contacts jasmonate. Residues Thr-126, Asn-172, and 337 to 342 (GASEGW) each bind ATP. 170–174 (TTNVY) contributes to the an L-alpha-amino acid binding site. Jasmonate contacts are provided by residues 334–337 (AEYG) and Ser-339.

Belongs to the IAA-amido conjugating enzyme family. In terms of tissue distribution, expressed in green shoots and flowers.

It carries out the reaction a jasmonate + an L-alpha-amino acid + ATP = a jasmonyl-L-amino acid + AMP + diphosphate + H(+). Its function is as follows. Catalyzes the synthesis of jasmonate-amino acid conjugates by adenylation. Catalyzes the conjugation of jasmonate (JA) to Ile when expressed in a heterologous system (E.coli). Catalyzes in vitro the conjugation of jasmonate (JA) to Ile, Phe, Leu, Met, Val and Trp. May catalyze the synthesis of indole-3-acetic acid (IAA)-amino acid conjugates, providing a mechanism for the plant to cope with the presence of excess auxin. The protein is Jasmonoyl--L-amino acid synthetase GH3.3 of Oryza sativa subsp. japonica (Rice).